The following is a 157-amino-acid chain: Protein Smg homolog (157 aa).

This sequence belongs to the Smg family.

The sequence is that of Protein Smg homolog from Shewanella woodyi (strain ATCC 51908 / MS32).